Reading from the N-terminus, the 252-residue chain is Small ribosomal subunit protein uS3 (252 aa).

In terms of domain architecture, KH type-2 spans 39-111; it reads IRKLINNFTK…DVNLNVLEVK (73 aa). A disordered region spans residues 222–252; the sequence is KPFASQSSNTPNRRPRNFKGGNNNHVNAKKN. Residues 241–252 are compositionally biased toward polar residues; the sequence is GGNNNHVNAKKN.

This sequence belongs to the universal ribosomal protein uS3 family. In terms of assembly, part of the 30S ribosomal subunit. Forms a tight complex with proteins S10 and S14.

Binds the lower part of the 30S subunit head. Binds mRNA in the 70S ribosome, positioning it for translation. The polypeptide is Small ribosomal subunit protein uS3 (Onion yellows phytoplasma (strain OY-M)).